Here is a 260-residue protein sequence, read N- to C-terminus: Snake venom serine protease salmobin (260 aa).

Positions 1–18 are cleaved as a signal peptide; it reads MVLIKVLANHLILQLSYA. The propeptide occupies 19–24; the sequence is QKSSEL. The 227-residue stretch at 25–251 folds into the Peptidase S1 domain; that stretch reads VIGGDECNIN…YTDWIQSIIA (227 aa). Intrachain disulfides connect Cys-31–Cys-165, Cys-52–Cys-68, Cys-102–Cys-258, Cys-144–Cys-212, Cys-176–Cys-191, and Cys-202–Cys-227. His-67 serves as the catalytic Charge relay system. Asn-105 carries N-linked (GlcNAc...) asparagine glycosylation. Catalysis depends on Asp-112, which acts as the Charge relay system. N-linked (GlcNAc...) asparagine glycans are attached at residues Asn-123 and Asn-156. Catalysis depends on Ser-206, which acts as the Charge relay system.

The protein belongs to the peptidase S1 family. Snake venom subfamily. Monomer. As to expression, expressed by the venom gland.

It is found in the secreted. Snake venom serine protease that may act in the hemostasis system of the prey. The chain is Snake venom serine protease salmobin from Gloydius halys (Chinese water mocassin).